Reading from the N-terminus, the 131-residue chain is Profilin-5 (131 aa).

Cys13 and Cys115 form a disulfide bridge. Positions 81 to 97 match the Involved in PIP2 interaction motif; it reads AVIRGKKGAGGITIKKT. Thr111 is subject to Phosphothreonine.

This sequence belongs to the profilin family. As to quaternary structure, occurs in many kinds of cells as a complex with monomeric actin in a 1:1 ratio. Phosphorylated by MAP kinases.

The protein resides in the cytoplasm. Its subcellular location is the cytoskeleton. In terms of biological role, binds to actin and affects the structure of the cytoskeleton. At high concentrations, profilin prevents the polymerization of actin, whereas it enhances it at low concentrations. In Olea europaea (Common olive), this protein is Profilin-5.